Consider the following 945-residue polypeptide: Probable inorganic carbon transporter subunit DabA (945 aa).

Zn(2+)-binding residues include Cys-408, Asp-410, His-651, and Cys-666.

The protein belongs to the inorganic carbon transporter (TC 9.A.2) DabA family. As to quaternary structure, forms a complex with DabB. Zn(2+) is required as a cofactor.

Its subcellular location is the cell inner membrane. Functionally, part of an energy-coupled inorganic carbon pump. The sequence is that of Probable inorganic carbon transporter subunit DabA from Sulfurihydrogenibium azorense (strain DSM 15241 / OCM 825 / Az-Fu1).